The sequence spans 444 residues: Cobyrinate a,c-diamide synthase (444 aa).

The GATase cobBQ-type domain occupies 250–438; it reads IIAIAQDRAF…PHIHFFGSYK (189 aa). Catalysis depends on Cys-332, which acts as the Nucleophile.

It belongs to the CobB/CbiA family. Requires Mg(2+) as cofactor.

It catalyses the reaction cob(II)yrinate + 2 L-glutamine + 2 ATP + 2 H2O = cob(II)yrinate a,c diamide + 2 L-glutamate + 2 ADP + 2 phosphate + 2 H(+). Its pathway is cofactor biosynthesis; adenosylcobalamin biosynthesis; cob(II)yrinate a,c-diamide from sirohydrochlorin (anaerobic route): step 10/10. Catalyzes the ATP-dependent amidation of the two carboxylate groups at positions a and c of cobyrinate, using either L-glutamine or ammonia as the nitrogen source. The polypeptide is Cobyrinate a,c-diamide synthase (Fusobacterium nucleatum subsp. nucleatum (strain ATCC 25586 / DSM 15643 / BCRC 10681 / CIP 101130 / JCM 8532 / KCTC 2640 / LMG 13131 / VPI 4355)).